An 874-amino-acid polypeptide reads, in one-letter code: Alanine--tRNA ligase (874 aa).

Zn(2+) is bound by residues histidine 563, histidine 567, cysteine 664, and histidine 668.

It belongs to the class-II aminoacyl-tRNA synthetase family. Zn(2+) is required as a cofactor.

The protein localises to the cytoplasm. It catalyses the reaction tRNA(Ala) + L-alanine + ATP = L-alanyl-tRNA(Ala) + AMP + diphosphate. Its function is as follows. Catalyzes the attachment of alanine to tRNA(Ala) in a two-step reaction: alanine is first activated by ATP to form Ala-AMP and then transferred to the acceptor end of tRNA(Ala). Also edits incorrectly charged Ser-tRNA(Ala) and Gly-tRNA(Ala) via its editing domain. The sequence is that of Alanine--tRNA ligase from Methylobacillus flagellatus (strain ATCC 51484 / DSM 6875 / VKM B-1610 / KT).